The following is a 291-amino-acid chain: ATP synthase gamma chain (291 aa).

Belongs to the ATPase gamma chain family. As to quaternary structure, F-type ATPases have 2 components, CF(1) - the catalytic core - and CF(0) - the membrane proton channel. CF(1) has five subunits: alpha(3), beta(3), gamma(1), delta(1), epsilon(1). CF(0) has three main subunits: a, b and c.

The protein resides in the cell inner membrane. In terms of biological role, produces ATP from ADP in the presence of a proton gradient across the membrane. The gamma chain is believed to be important in regulating ATPase activity and the flow of protons through the CF(0) complex. The polypeptide is ATP synthase gamma chain (Caulobacter vibrioides (strain NA1000 / CB15N) (Caulobacter crescentus)).